We begin with the raw amino-acid sequence, 120 residues long: Spermidine export protein MdtJ (120 aa).

The next 4 helical transmembrane spans lie at M1–M21, T31–V51, I54–F74, and E81–I101.

Belongs to the drug/metabolite transporter (DMT) superfamily. Small multidrug resistance (SMR) (TC 2.A.7.1) family. MdtJ subfamily. In terms of assembly, forms a complex with MdtI.

It is found in the cell inner membrane. Catalyzes the excretion of spermidine. In Citrobacter koseri (strain ATCC BAA-895 / CDC 4225-83 / SGSC4696), this protein is Spermidine export protein MdtJ.